The sequence spans 511 residues: Pickpocket protein 19 (511 aa).

Helical transmembrane passes span 59 to 79 and 471 to 491; these read LWLA…TVLM and GIIS…LFVL.

The protein belongs to the amiloride-sensitive sodium channel (TC 1.A.6) family. In terms of tissue distribution, expressed in the tracheal system. Expressed in the taste-sensing terminal organ of the larval head. In adults, expressed in hairs on the tibia, femur and wing margin, but not in hairs on the tarsi of the leg.

It localises to the membrane. In terms of biological role, part of a complex that plays a role in tracheal liquid clearance. In both larvae and adults, contributes to the behavioral response to salt. Probable role in sodium transport. This chain is Pickpocket protein 19 (ppk19), found in Drosophila melanogaster (Fruit fly).